The primary structure comprises 76 residues: NADH-ubiquinone oxidoreductase chain 4L (76 aa).

Helical transmembrane passes span 1-21 (MTPVHFSFTSAFILGLMGLAF), 29-49 (ALLCLEGMMLSLFIALSLWAL), and 56-76 (YSVAPMLLLAFSACEASAGLA).

This sequence belongs to the complex I subunit 4L family.

It is found in the mitochondrion membrane. The enzyme catalyses a ubiquinone + NADH + 5 H(+)(in) = a ubiquinol + NAD(+) + 4 H(+)(out). Core subunit of the mitochondrial membrane respiratory chain NADH dehydrogenase (Complex I) which catalyzes electron transfer from NADH through the respiratory chain, using ubiquinone as an electron acceptor. Part of the enzyme membrane arm which is embedded in the lipid bilayer and involved in proton translocation. This chain is NADH-ubiquinone oxidoreductase chain 4L (MT-ND4L), found in Oncorhynchus masou (Cherry salmon).